Reading from the N-terminus, the 73-residue chain is DNA gyrase inhibitor YacG (73 aa).

Positions 12, 15, 31, and 35 each coordinate Zn(2+). Residues 47–73 (DYAIPGEPIDPAEPSEDRNGAEGPPTD) form a disordered region.

The protein belongs to the DNA gyrase inhibitor YacG family. Interacts with GyrB. The cofactor is Zn(2+).

Inhibits all the catalytic activities of DNA gyrase by preventing its interaction with DNA. Acts by binding directly to the C-terminal domain of GyrB, which probably disrupts DNA binding by the gyrase. The sequence is that of DNA gyrase inhibitor YacG from Methylococcus capsulatus (strain ATCC 33009 / NCIMB 11132 / Bath).